The following is a 146-amino-acid chain: MNLSNLRAPKKANRNRKRVGRGMGSGHGKTSTRGHKGQRSRSGSRSMRGFEGGQMPLHRRLPKRGFTNIFRTEYTVLNLSRLAELNETELTIDAFIAKGLLDKRNGLLKILGNGELTTAITVHAHKFSKSAQEKIEKVGGKAILVA.

A disordered region spans residues 1 to 58 (MNLSNLRAPKKANRNRKRVGRGMGSGHGKTSTRGHKGQRSRSGSRSMRGFEGGQMPLH). Composition is skewed to basic residues over residues 8–20 (APKK…KRVG) and 30–39 (TSTRGHKGQR). The segment covering 40–49 (SRSGSRSMRG) has biased composition (low complexity).

Belongs to the universal ribosomal protein uL15 family. As to quaternary structure, part of the 50S ribosomal subunit.

Functionally, binds to the 23S rRNA. The sequence is that of Large ribosomal subunit protein uL15 from Acidobacterium capsulatum (strain ATCC 51196 / DSM 11244 / BCRC 80197 / JCM 7670 / NBRC 15755 / NCIMB 13165 / 161).